Reading from the N-terminus, the 252-residue chain is Protein BTG3 (252 aa).

Residues 138-162 (VTSDYHSGSSSSDEDTSKEVEVKPS) form a disordered region.

The protein belongs to the BTG family. Highly expressed in the brain.

Its function is as follows. Overexpression impairs serum-induced cell cycle progression from the G0/G1 to S phase. In Rattus norvegicus (Rat), this protein is Protein BTG3.